Reading from the N-terminus, the 182-residue chain is ATP synthase subunit delta (182 aa).

This sequence belongs to the ATPase delta chain family. F-type ATPases have 2 components, F(1) - the catalytic core - and F(0) - the membrane proton channel. F(1) has five subunits: alpha(3), beta(3), gamma(1), delta(1), epsilon(1). CF(0) has four main subunits: a(1), b(1), b'(1) and c(10-14). The alpha and beta chains form an alternating ring which encloses part of the gamma chain. F(1) is attached to F(0) by a central stalk formed by the gamma and epsilon chains, while a peripheral stalk is formed by the delta, b and b' chains.

Its subcellular location is the cellular thylakoid membrane. Functionally, f(1)F(0) ATP synthase produces ATP from ADP in the presence of a proton or sodium gradient. F-type ATPases consist of two structural domains, F(1) containing the extramembraneous catalytic core and F(0) containing the membrane proton channel, linked together by a central stalk and a peripheral stalk. During catalysis, ATP synthesis in the catalytic domain of F(1) is coupled via a rotary mechanism of the central stalk subunits to proton translocation. Its function is as follows. This protein is part of the stalk that links CF(0) to CF(1). It either transmits conformational changes from CF(0) to CF(1) or is implicated in proton conduction. This Synechococcus sp. (strain WH7803) protein is ATP synthase subunit delta.